The sequence spans 103 residues: uncharacterized protein (103 aa).

An N-terminal signal peptide occupies residues 1–13 (MLLSSIVSFVADA). An N-linked (GlcNAc...) asparagine glycan is attached at asparagine 67. Positions 73 to 103 (LSSDSNRNIIDNSNNNQHPSSSSTSTSWKKF) are disordered.

Its subcellular location is the secreted. This is an uncharacterized protein from Dictyostelium discoideum (Social amoeba).